A 308-amino-acid polypeptide reads, in one-letter code: GMP synthase [glutamine-hydrolyzing] subunit B (308 aa).

In terms of domain architecture, GMPS ATP-PPase spans 2-183 (LNPSDFIEEA…LGLPREMIQR (182 aa)). 29-35 (SGGVDSS) contacts ATP.

As to quaternary structure, heterodimer composed of a glutamine amidotransferase subunit (A) and a GMP-binding subunit (B).

The catalysed reaction is XMP + L-glutamine + ATP + H2O = GMP + L-glutamate + AMP + diphosphate + 2 H(+). Its pathway is purine metabolism; GMP biosynthesis; GMP from XMP (L-Gln route): step 1/1. In terms of biological role, catalyzes the synthesis of GMP from XMP. The polypeptide is GMP synthase [glutamine-hydrolyzing] subunit B (guaAB) (Methanothermobacter thermautotrophicus (strain ATCC 29096 / DSM 1053 / JCM 10044 / NBRC 100330 / Delta H) (Methanobacterium thermoautotrophicum)).